A 697-amino-acid chain; its full sequence is Ion-translocating oxidoreductase complex subunit C (697 aa).

2 consecutive 4Fe-4S ferredoxin-type domains span residues Ala-366–Tyr-397 and Lys-407–Tyr-436. Residues Cys-377, Cys-380, Cys-383, Cys-387, Cys-416, Cys-419, Cys-422, and Cys-426 each contribute to the [4Fe-4S] cluster site. A disordered region spans residues Ala-576–Ala-674. Over residues Glu-581–Lys-596 the composition is skewed to basic and acidic residues. Residues Ala-597–Gln-615 are compositionally biased toward low complexity. Over residues Glu-619–Lys-634 the composition is skewed to basic and acidic residues. Residues Ala-635 to Gln-653 show a composition bias toward low complexity. The span at Glu-657–Lys-672 shows a compositional bias: basic and acidic residues.

It belongs to the 4Fe4S bacterial-type ferredoxin family. RnfC subfamily. In terms of assembly, the complex is composed of six subunits: RnfA, RnfB, RnfC, RnfD, RnfE and RnfG. The cofactor is [4Fe-4S] cluster.

It localises to the cell inner membrane. Part of a membrane-bound complex that couples electron transfer with translocation of ions across the membrane. This Yersinia enterocolitica serotype O:8 / biotype 1B (strain NCTC 13174 / 8081) protein is Ion-translocating oxidoreductase complex subunit C.